A 240-amino-acid chain; its full sequence is Ribonuclease PH (240 aa).

Phosphate-binding positions include arginine 86 and 124–126 (GTR).

The protein belongs to the RNase PH family. In terms of assembly, homohexameric ring arranged as a trimer of dimers.

It carries out the reaction tRNA(n+1) + phosphate = tRNA(n) + a ribonucleoside 5'-diphosphate. Phosphorolytic 3'-5' exoribonuclease that plays an important role in tRNA 3'-end maturation. Removes nucleotide residues following the 3'-CCA terminus of tRNAs; can also add nucleotides to the ends of RNA molecules by using nucleoside diphosphates as substrates, but this may not be physiologically important. Probably plays a role in initiation of 16S rRNA degradation (leading to ribosome degradation) during starvation. The chain is Ribonuclease PH from Mannheimia succiniciproducens (strain KCTC 0769BP / MBEL55E).